The chain runs to 335 residues: Ficolin-1 (335 aa).

The first 17 residues, 1–17 (MWWPMLWAFPVLLCLCS), serve as a signal peptide directing secretion. Residues 47–114 (SCPSFPGPPG…TASPLGQKEL (68 aa)) form a disordered region. A Collagen-like domain is found at 50 to 88 (SFPGPPGPKGEPGSPAGRGERGLQGSPGKMGPPGSKGEP). Over residues 75-88 (SPGKMGPPGSKGEP) the composition is skewed to low complexity. One can recognise a Fibrinogen C-terminal domain in the interval 117 to 335 (ALCRRGPRSC…KVAEMKIRAS (219 aa)). 2 disulfides stabilise this stretch: Cys-119–Cys-147 and Cys-126–Cys-154. The interval 123 to 162 (PRSCKDLLTRGIFLTGWYTIYLPDCRPLTVLCDMDVDGGG) is a domain; contributes to trimerization. Residues 163-251 (WTVFQRRVDG…LTLGQFLEGT (89 aa)) form a b domain; contributes to trimerization region. Ca(2+) is bound at residue Asp-270. A glycan (N-linked (GlcNAc...) asparagine) is linked at Asn-271. Residue Asp-272 coordinates Ca(2+). Cys-279 and Cys-292 are joined by a disulfide. Residue 291–293 (DCH) participates in a carbohydrate binding. The tract at residues 326–335 (KVAEMKIRAS) is p domain.

The protein belongs to the ficolin lectin family. As to quaternary structure, homotrimer. Interacts with elastin/ELN. Interacts (via Fibrinogen C-terminal domain) with FFAR2. Interacts with CRP; may regulate monocyte activation by FCN1.

It is found in the secreted. It localises to the cell membrane. Its function is as follows. Extracellular lectin functioning as a pattern-recognition receptor in innate immunity. Binds the sugar moieties of pathogen-associated molecular patterns (PAMPs) displayed on microbes and activates the lectin pathway of the complement system. May also activate monocytes through a G protein-coupled receptor, FFAR2, inducing the secretion of interleukin-8/IL-8. Binds preferentially to 9-O-acetylated 2-6-linked sialic acid derivatives and to various glycans containing sialic acid engaged in a 2-3 linkage. This Rattus norvegicus (Rat) protein is Ficolin-1 (Fcn1).